The chain runs to 208 residues: dITP/XTP pyrophosphatase (208 aa).

Residue 16 to 21 (SNNKGK) coordinates substrate. The Proton acceptor role is filled by Asp-79. Asp-79 lines the Mg(2+) pocket. Substrate is bound by residues Ser-80, 166–169 (FGYD), Lys-189, and 194–195 (HR).

It belongs to the HAM1 NTPase family. Homodimer. The cofactor is Mg(2+).

The enzyme catalyses XTP + H2O = XMP + diphosphate + H(+). It carries out the reaction dITP + H2O = dIMP + diphosphate + H(+). It catalyses the reaction ITP + H2O = IMP + diphosphate + H(+). In terms of biological role, pyrophosphatase that catalyzes the hydrolysis of nucleoside triphosphates to their monophosphate derivatives, with a high preference for the non-canonical purine nucleotides XTP (xanthosine triphosphate), dITP (deoxyinosine triphosphate) and ITP. Seems to function as a house-cleaning enzyme that removes non-canonical purine nucleotides from the nucleotide pool, thus preventing their incorporation into DNA/RNA and avoiding chromosomal lesions. The chain is dITP/XTP pyrophosphatase from Acinetobacter baumannii (strain ACICU).